Consider the following 219-residue polypeptide: Ribose-5-phosphate isomerase A (219 aa).

Substrate is bound by residues 28–31, 81–84, and 94–97; these read TGST, DGAD, and KGGG. E103 serves as the catalytic Proton acceptor. K121 lines the substrate pocket.

The protein belongs to the ribose 5-phosphate isomerase family. As to quaternary structure, homodimer.

It catalyses the reaction aldehydo-D-ribose 5-phosphate = D-ribulose 5-phosphate. It functions in the pathway carbohydrate degradation; pentose phosphate pathway; D-ribose 5-phosphate from D-ribulose 5-phosphate (non-oxidative stage): step 1/1. Its function is as follows. Catalyzes the reversible conversion of ribose-5-phosphate to ribulose 5-phosphate. This is Ribose-5-phosphate isomerase A from Shewanella loihica (strain ATCC BAA-1088 / PV-4).